The sequence spans 419 residues: Gamma-glutamyl phosphate reductase (419 aa).

It belongs to the gamma-glutamyl phosphate reductase family.

The protein resides in the cytoplasm. The enzyme catalyses L-glutamate 5-semialdehyde + phosphate + NADP(+) = L-glutamyl 5-phosphate + NADPH + H(+). It participates in amino-acid biosynthesis; L-proline biosynthesis; L-glutamate 5-semialdehyde from L-glutamate: step 2/2. Its function is as follows. Catalyzes the NADPH-dependent reduction of L-glutamate 5-phosphate into L-glutamate 5-semialdehyde and phosphate. The product spontaneously undergoes cyclization to form 1-pyrroline-5-carboxylate. This is Gamma-glutamyl phosphate reductase from Caldicellulosiruptor bescii (strain ATCC BAA-1888 / DSM 6725 / KCTC 15123 / Z-1320) (Anaerocellum thermophilum).